The primary structure comprises 125 residues: Conopressin-conophysin, isoform 1 (125 aa).

The signal sequence occupies residues 1-22 (MQMGRPTLLPCLLLLLVLSTQA). Cys23 and Cys28 form a disulfide bridge. Glycine amide is present on Gly31. A propeptide spanning residues 32–39 (GKRDVHMI) is cleaved from the precursor. Disulfide bonds link Cys45-Cys85, Cys48-Cys59, Cys53-Cys75, Cys60-Cys65, Cys92-Cys112, Cys104-Cys124, and Cys113-Cys118.

This sequence belongs to the vasopressin/oxytocin family. Expressed by the venom gland.

It localises to the secreted. Its function is as follows. Targets vasopressin-oxytocin related receptors. The chain is Conopressin-conophysin, isoform 1 from Conus monile (Necklace cone).